The chain runs to 1168 residues: Protein VARIATION IN COMPOUND TRIGGERED ROOT growth response (1168 aa).

A TIR domain is found at 10-171 (WVYDVFLSFS…EIANDVLAKL (162 aa)). Residue E85 is part of the active site. The region spanning 187 to 452 (EDHIANMSVL…ACLFNHVKVR (266 aa)) is the NB-ARC domain. LRR repeat units follow at residues 539–562 (TSKV…LFLD), 606–629 (LRNL…AMSF), 631–653 (CLKE…SKAT), 676–699 (LNKL…GFNL), 701–720 (SLDY…PEFA), 721–744 (TNIS…YFKN), 795–820 (LNNL…NLES), 839–865 (STNI…FFNL), 873–896 (CREL…SFSN), and 1065–1089 (NVPL…DWRS).

The protein belongs to the disease resistance NB-LRR family. As to quaternary structure, part of a nuclear protein complex made of VICTR, PAD4 and EDS1. Interacts (via TIR domain) with PAD4 and EDS1.

It is found in the cytoplasm. The protein localises to the nucleus. The catalysed reaction is NAD(+) + H2O = ADP-D-ribose + nicotinamide + H(+). Its function is as follows. Disease resistance protein of the TIR-NB-LRR-type. Part of the RPS6 locus that contains a cluster of several paralogous disease resistance (R) genes. Resistance proteins guard the plant against pathogens that contain an appropriate avirulence protein via an indirect interaction with this avirulence protein. That triggers a defense system including the hypersensitive response, which restricts the pathogen growth. Required for [5-(3,4-dichlorophenyl)furan-2-yl]-piperidine-1-ylmethanethione-(DFPM-) induced root growth arrest due to reduced number of meristem cells in the division zone of the primary root and inhibition of abscisic acid- (ABA-) induced stomatal closing. This chain is Protein VARIATION IN COMPOUND TRIGGERED ROOT growth response (VICTR), found in Arabidopsis thaliana (Mouse-ear cress).